We begin with the raw amino-acid sequence, 501 residues long: ATP synthase subunit alpha (501 aa).

169-176 (GDRQTGKT) lines the ATP pocket.

Belongs to the ATPase alpha/beta chains family. F-type ATPases have 2 components, CF(1) - the catalytic core - and CF(0) - the membrane proton channel. CF(1) has five subunits: alpha(3), beta(3), gamma(1), delta(1), epsilon(1). CF(0) has three main subunits: a(1), b(2) and c(9-12). The alpha and beta chains form an alternating ring which encloses part of the gamma chain. CF(1) is attached to CF(0) by a central stalk formed by the gamma and epsilon chains, while a peripheral stalk is formed by the delta and b chains.

The protein resides in the cell membrane. The enzyme catalyses ATP + H2O + 4 H(+)(in) = ADP + phosphate + 5 H(+)(out). Functionally, produces ATP from ADP in the presence of a proton gradient across the membrane. The alpha chain is a regulatory subunit. This Streptococcus pneumoniae serotype 2 (strain D39 / NCTC 7466) protein is ATP synthase subunit alpha.